The chain runs to 505 residues: Lysine--tRNA ligase (505 aa).

Residues E415 and E422 each coordinate Mg(2+).

It belongs to the class-II aminoacyl-tRNA synthetase family. As to quaternary structure, homodimer. Requires Mg(2+) as cofactor.

The protein resides in the cytoplasm. It catalyses the reaction tRNA(Lys) + L-lysine + ATP = L-lysyl-tRNA(Lys) + AMP + diphosphate. The chain is Lysine--tRNA ligase from Xanthomonas axonopodis pv. citri (strain 306).